Here is a 354-residue protein sequence, read N- to C-terminus: Zinc finger protein 346 (354 aa).

4 consecutive Matrin-type zinc fingers follow at residues 34 to 64 (TQCK…KVRR), 95 to 125 (KCCP…NLRL), 165 to 195 (KFCK…QETK), and 232 to 262 (FSCD…QLMS). Residues Cys36, Cys39, His52, His58, Cys97, Cys100, His113, and His119 each contribute to the Zn(2+) site. Residues 263–343 (MTPLSKEGPP…QPYVREDMMG (81 aa)) form a disordered region. 2 stretches are compositionally biased toward low complexity: residues 270 to 289 (GPPA…TGGA) and 310 to 323 (GPSS…MGGL). Residues 324–333 (MPPPYPPPHS) show a composition bias toward pro residues.

The protein localises to the nucleus. It localises to the cytoplasm. Its function is as follows. Binds preferentially to dsRNA, but also to RNA-DNA hybrids. The chain is Zinc finger protein 346 from Xenopus tropicalis (Western clawed frog).